The sequence spans 124 residues: Membrane magnesium transporter 2 (124 aa).

A topological domain (cytoplasmic) is located at residue Met-1. A helical membrane pass occupies residues 2-22; it reads VAWLWKVLVGVGLSALAHAAF. Over 23-44 the chain is Lumenal; sequence SAAQHRSHTRLAEMKYEPLPTD. A helical membrane pass occupies residues 45-65; that stretch reads IVLQTLLAFALTCYGVVHTAG. At 66 to 124 the chain is on the cytoplasmic side; it reads DFRDRDATSELKNVTFDTLRNRPSFYVFQHSGSSLLQPSDTTRSSNLNVPSSDDIRLKF.

The protein belongs to the membrane magnesium transporter (TC 1.A.67) family.

Its subcellular location is the golgi apparatus membrane. It is found in the early endosome membrane. In terms of biological role, mediates Mg(2+) transport. This Rattus norvegicus (Rat) protein is Membrane magnesium transporter 2.